Reading from the N-terminus, the 141-residue chain is Nucleoside diphosphate kinase (141 aa).

ATP is bound by residues K11, F59, R87, T93, R104, and N114. The Pros-phosphohistidine intermediate role is filled by H117.

The protein belongs to the NDK family. In terms of assembly, homotetramer. Mg(2+) serves as cofactor.

Its subcellular location is the cytoplasm. It carries out the reaction a 2'-deoxyribonucleoside 5'-diphosphate + ATP = a 2'-deoxyribonucleoside 5'-triphosphate + ADP. The enzyme catalyses a ribonucleoside 5'-diphosphate + ATP = a ribonucleoside 5'-triphosphate + ADP. Functionally, major role in the synthesis of nucleoside triphosphates other than ATP. The ATP gamma phosphate is transferred to the NDP beta phosphate via a ping-pong mechanism, using a phosphorylated active-site intermediate. This chain is Nucleoside diphosphate kinase, found in Pseudomonas putida (strain W619).